The sequence spans 1015 residues: Translation initiation factor IF-2 (1015 aa).

4 disordered regions span residues 124-144 (EKEP…EKKV), 159-179 (EVTV…PKPV), 196-230 (KKEE…KEEE), and 250-386 (IDLA…VSEE). Composition is skewed to basic and acidic residues over residues 196–217 (KKEE…EKPV) and 265–315 (SKEE…DPNG). One can recognise a tr-type G domain in the interval 514–684 (HRAPIVTVMG…LLEAEMLDLK (171 aa)). The interval 523–530 (GHVDHGKT) is G1. 523-530 (GHVDHGKT) provides a ligand contact to GTP. A G2 region spans residues 548–552 (GITQH). Residues 570–573 (DTPG) form a G3 region. Residues 570–574 (DTPGH) and 624–627 (NKID) contribute to the GTP site. The interval 624–627 (NKID) is G4. Residues 660–662 (SAK) form a G5 region.

The protein belongs to the TRAFAC class translation factor GTPase superfamily. Classic translation factor GTPase family. IF-2 subfamily.

It localises to the cytoplasm. In terms of biological role, one of the essential components for the initiation of protein synthesis. Protects formylmethionyl-tRNA from spontaneous hydrolysis and promotes its binding to the 30S ribosomal subunits. Also involved in the hydrolysis of GTP during the formation of the 70S ribosomal complex. In Bacteroides fragilis (strain ATCC 25285 / DSM 2151 / CCUG 4856 / JCM 11019 / LMG 10263 / NCTC 9343 / Onslow / VPI 2553 / EN-2), this protein is Translation initiation factor IF-2.